We begin with the raw amino-acid sequence, 256 residues long: ATG8-interacting protein 1 (256 aa).

An AIM (Atg8-family-interacting motif) motif is present at residues 14–17 (WEVV). A helical transmembrane segment spans residues 181–200 (ANAIWSLFFAAAVTGLVVLG). Positions 208–211 (WQVL) match the AIM (Atg8-family-interacting motif) motif.

Interacts with ATG8F. Interacts with ATG8H. Interacts with APE1 and PSBS/NPQ4.

The protein resides in the endoplasmic reticulum membrane. It is found in the membrane. Its subcellular location is the plastid. It localises to the chloroplast membrane. Involved in a special stress-induced plastid-to-vacuole protein trafficking pathway. Interacts with ATG8F in plastid bodies to subsequently enable their delivery to the vacuole by an autophagic pathway. Interacts with the plastid proteins APE1 and PSBS/NPQ4 and may recruit them as cargo into plastid bodies that may be recognized by the autophagy machinery for degradation in the vacuole. Involved in the alleviation of damage caused by salt stress during plant development, probably through its involvement in plastid-to-vacuole and ER-to-vacuole trafficking. Plays a role in seed germination in response to exogenous abscisic acid (ABA) treatment. The sequence is that of ATG8-interacting protein 1 from Arabidopsis thaliana (Mouse-ear cress).